The primary structure comprises 786 residues: Zinc finger transcription factor YRM1 (786 aa).

The tract at residues 1–25 is disordered; it reads MSKRGSLQDRASPSEETVKKAQKRR. Residues 31-59 constitute a DNA-binding region (zn(2)-C6 fungal-type); it reads CAFCRKRKLRCDQQKPMCSTCKTRGRSGC. A disordered region spans residues 721–747; that stretch reads PLAGNSPGLPPEEVRNNSENASHNNET. The span at 737-747 shows a compositional bias: polar residues; the sequence is NSENASHNNET.

The protein resides in the cytoplasm. Its subcellular location is the nucleus. Its function is as follows. Transcription factor involved in the regulation of multidrug resistance genes. Acts in concert with YRR1. This Saccharomyces cerevisiae (strain ATCC 204508 / S288c) (Baker's yeast) protein is Zinc finger transcription factor YRM1 (YRM1).